Here is a 1280-residue protein sequence, read N- to C-terminus: Rho guanine nucleotide exchange factor 10-like protein (1280 aa).

Pro residues predominate over residues 1–10 (MASSNPPPQP). The disordered stretch occupies residues 1-94 (MASSNPPPQP…TEAPTVVSNG (94 aa)). A compositionally biased stretch (acidic residues) spans 26–46 (EVEEDSGEAFEFDDSDEEEDT). Ser40 bears the Phosphoserine mark. The span at 78 to 89 (PAAAPPQTEAPT) shows a compositional bias: low complexity. Phosphotyrosine occurs at positions 131 and 152. The disordered stretch occupies residues 161 to 202 (PRETEDLGWSSSEFESYSEDSGEETKPEAEPTKHRGSFQPKL). Residues 183–193 (EETKPEAEPTK) are compositionally biased toward basic and acidic residues. Ser279 carries the phosphoserine modification. Residues 314–501 (VRRHILGSIV…ETLAEKLNEQ (188 aa)) enclose the DH domain. Disordered regions lie at residues 1133–1163 (QEEA…HTAR) and 1186–1207 (PLLS…SEED).

Interacts with RHOA, RHOB and RHOC.

The protein localises to the cytoplasm. In terms of biological role, acts as a guanine nucleotide exchange factor (GEF) for RHOA, RHOB and RHOC. The chain is Rho guanine nucleotide exchange factor 10-like protein (Arhgef10l) from Mus musculus (Mouse).